Reading from the N-terminus, the 318-residue chain is 2,4-dinitroanisole O-demethylase subunit beta (318 aa).

It belongs to the metallo-beta-lactamase superfamily. Part of the complex DnhAB composed of the 2,4-dinitroanisole O-demethylase alpha (DnhA) and beta (DnhB) subunits.

It catalyses the reaction 2,4-dinitroanisole + H2O = 2,4-dinitrophenol + methanol + H(+). Functionally, involved in the degradation of 2,4-dinitroanisole (DNAN), an insensitive munition ingredient used in explosive formulations as a replacement for 2,4,6-trinitrotoluene (TNT). Catalyzes the removal of the methyl group from 2,4-dinitroanisole (DNAN) to yield 2,4-dinitrophenol (2,4-DNP) and methanol. This Nocardioides sp. (strain JS1661) protein is 2,4-dinitroanisole O-demethylase subunit beta.